Reading from the N-terminus, the 301-residue chain is GTPase Era (301 aa).

Residues 4-173 (KAGFVALIGK…LECISQHLSP (170 aa)) enclose the Era-type G domain. Residues 12–19 (GKPNAGKS) form a G1 region. GTP is bound at residue 12–19 (GKPNAGKS). Residues 38 to 42 (NATRK) form a G2 region. Residues 64–67 (DTPG) are G3. GTP is bound by residues 64 to 68 (DTPGL) and 122 to 125 (SKID). The G4 stretch occupies residues 122 to 125 (SKID). The segment at 152–154 (LSA) is G5. Residues 204 to 280 (LSDEIPYESD…FLNLQVIAQK (77 aa)) enclose the KH type-2 domain.

The protein belongs to the TRAFAC class TrmE-Era-EngA-EngB-Septin-like GTPase superfamily. Era GTPase family. Monomer.

It is found in the cytoplasm. The protein resides in the cell inner membrane. Its function is as follows. An essential GTPase that binds both GDP and GTP, with rapid nucleotide exchange. Plays a role in 16S rRNA processing and 30S ribosomal subunit biogenesis and possibly also in cell cycle regulation and energy metabolism. The polypeptide is GTPase Era (Helicobacter pylori (strain ATCC 700392 / 26695) (Campylobacter pylori)).